Reading from the N-terminus, the 93-residue chain is MSFLFGGPPKMSSAEKIAAAETEVEMVSDMFNRLTESCQKKCIPNDYREGDLNKGESVCLDRCVSKFFEVNIKVSEKMQGEAAQKQGAPGFGM.

The short motif at 38–63 (CQKKCIPNDYREGDLNKGESVCLDRC) is the Twin CX3C motif element. Disulfide bonds link Cys-38–Cys-63 and Cys-42–Cys-59.

This sequence belongs to the small Tim family. In terms of assembly, heterohexamer; composed of 3 copies of TIM9 and 3 copies of TIM10, named soluble 70 kDa complex. Associates directly with the TIM22 complex, whose core is composed of TIM22 and TIM54. Interacts with the transmembrane regions of multi-pass transmembrane proteins in transit.

The protein resides in the mitochondrion inner membrane. Its function is as follows. Mitochondrial intermembrane chaperone that participates in the import and insertion of multi-pass transmembrane proteins into the mitochondrial inner membrane. Also required for the transfer of beta-barrel precursors from the TOM complex to the sorting and assembly machinery (SAM complex) of the outer membrane. Acts as a chaperone-like protein that protects the hydrophobic precursors from aggregation and guide them through the mitochondrial intermembrane space. The polypeptide is Mitochondrial import inner membrane translocase subunit tim10 (tim10) (Aspergillus fumigatus (strain ATCC MYA-4609 / CBS 101355 / FGSC A1100 / Af293) (Neosartorya fumigata)).